The primary structure comprises 278 residues: Dermonecrotic toxin LspiSicTox-betaIE2ii (278 aa).

His-5 is an active-site residue. Residues Glu-25 and Asp-27 each coordinate Mg(2+). Residue His-41 is the Nucleophile of the active site. Disulfide bonds link Cys-45–Cys-51 and Cys-47–Cys-190. Asp-85 contacts Mg(2+).

This sequence belongs to the arthropod phospholipase D family. Class II subfamily. It depends on Mg(2+) as a cofactor. Expressed by the venom gland.

It localises to the secreted. The catalysed reaction is an N-(acyl)-sphingosylphosphocholine = an N-(acyl)-sphingosyl-1,3-cyclic phosphate + choline. It carries out the reaction an N-(acyl)-sphingosylphosphoethanolamine = an N-(acyl)-sphingosyl-1,3-cyclic phosphate + ethanolamine. It catalyses the reaction a 1-acyl-sn-glycero-3-phosphocholine = a 1-acyl-sn-glycero-2,3-cyclic phosphate + choline. The enzyme catalyses a 1-acyl-sn-glycero-3-phosphoethanolamine = a 1-acyl-sn-glycero-2,3-cyclic phosphate + ethanolamine. Dermonecrotic toxins cleave the phosphodiester linkage between the phosphate and headgroup of certain phospholipids (sphingolipid and lysolipid substrates), forming an alcohol (often choline) and a cyclic phosphate. This toxin acts on sphingomyelin (SM). It may also act on ceramide phosphoethanolamine (CPE), lysophosphatidylcholine (LPC) and lysophosphatidylethanolamine (LPE), but not on lysophosphatidylserine (LPS), and lysophosphatidylglycerol (LPG). It acts by transphosphatidylation, releasing exclusively cyclic phosphate products as second products. Induces dermonecrosis, hemolysis, increased vascular permeability, edema, inflammatory response, and platelet aggregation. This is Dermonecrotic toxin LspiSicTox-betaIE2ii from Loxosceles spinulosa (Recluse spider).